We begin with the raw amino-acid sequence, 505 residues long: Glutamate--cysteine ligase (505 aa).

This sequence belongs to the glutamate--cysteine ligase type 1 family. Type 1 subfamily.

The enzyme catalyses L-cysteine + L-glutamate + ATP = gamma-L-glutamyl-L-cysteine + ADP + phosphate + H(+). It functions in the pathway sulfur metabolism; glutathione biosynthesis; glutathione from L-cysteine and L-glutamate: step 1/2. The polypeptide is Glutamate--cysteine ligase (Wigglesworthia glossinidia brevipalpis).